We begin with the raw amino-acid sequence, 211 residues long: MKSIVSVLTLLLLINAVAALRFVLPAKDKNELPFCVRDFVKNGELVVVTVESPKYADGQQLSVVVRDAHGNEYTRIKNVLGREITTFSSHQDTALDVCFHNVANSHQDLGKTKEIDLSVAIGANARDWEQIQASEKLKPAEVQLRKIEEIVDEVDKEMNYLKMREIRLRDTNESTNRRVKFFSVGITLALIALGVWQIIYLRSYFRSKHII.

Positions 1–19 (MKSIVSVLTLLLLINAVAA) are cleaved as a signal peptide. Residues 20–180 (LRFVLPAKDK…TNESTNRRVK (161 aa)) lie on the Lumenal side of the membrane. One can recognise a GOLD domain in the interval 33 to 121 (PFCVRDFVKN…TKEIDLSVAI (89 aa)). Residues 181 to 201 (FFSVGITLALIALGVWQIIYL) traverse the membrane as a helical segment. Residues 202 to 211 (RSYFRSKHII) are Cytoplasmic-facing.

It belongs to the EMP24/GP25L family.

It is found in the endoplasmic reticulum membrane. The protein resides in the golgi apparatus membrane. Functionally, constituent of COPII-coated endoplasmic reticulum-derived transport vesicles. Required for efficient transport of a subset of secretory proteins to the Golgi. Facilitates retrograde transport from the Golgi to the endoplasmic reticulum. This is Endoplasmic reticulum vesicle protein 25 (ERV25) from Yarrowia lipolytica (strain CLIB 122 / E 150) (Yeast).